The following is a 163-amino-acid chain: Olfactory marker protein (163 aa).

An N-acetylalanine modification is found at alanine 2.

Belongs to the olfactory marker protein family. Interacts with BEX1 and BEX2. Uniquely associated with mature olfactory receptor neurons.

The protein localises to the cytoplasm. In terms of biological role, may act as a modulator of the olfactory signal-transduction cascade. The sequence is that of Olfactory marker protein (Omp) from Rattus norvegicus (Rat).